The primary structure comprises 112 residues: Large ribosomal subunit protein eL22 (112 aa).

The protein belongs to the eukaryotic ribosomal protein eL22 family. Component of the large ribosomal subunit.

The protein resides in the cytoplasm. This Encephalitozoon cuniculi (strain GB-M1) (Microsporidian parasite) protein is Large ribosomal subunit protein eL22 (RPL22).